A 222-amino-acid polypeptide reads, in one-letter code: Lipid transferase CIDEC (222 aa).

A compositionally biased stretch (polar residues) spans 1 to 19; the sequence is MAMYTAVSTSVVTQQQLSE. Disordered stretches follow at residues 1-33 and 203-222; these read MAMY…CRVT and EQPP…KMLQ. Positions 1–33 are required for liquid-liquid phase separation (LLPS); it reads MAMYTAVSTSVVTQQQLSEPSAEAPRARPCRVT. The 78-residue stretch at 26-103 folds into the CIDE-N domain; sequence RARPCRVTTA…VLHKGQKWQP (78 aa).

It belongs to the CIDE family. As to quaternary structure, homodimer. Homooligomer; undergoes liquid-liquid phase separation (LLPS) via its N-terminus, facilitating lipid droplet fusion, occurs at the lipid droplet contact sites. Interacts with CIDEA. Interacts with PLIN1. Interacts with NFAT5; this interaction is direct and retains NFAT5 in the cytoplasm. Interacts with CEBPB. Interacts with isoform CLSTN3beta of CLSTN3; inhibiting the lipid transferase activity of CIDEC. In terms of processing, ubiquitinated and targeted to proteasomal degradation, resulting in a short half-life (about 15 minutes in 3T3-L1 cells). Protein stability depends on triaclyglycerol synthesis, fatty acid availability and lipid droplet formation.

The protein resides in the lipid droplet. The protein localises to the endoplasmic reticulum. Its subcellular location is the nucleus. The catalysed reaction is a triacyl-sn-glycerol(in) = a triacyl-sn-glycerol(out). Functionally, lipid transferase specifically expressed in white adipose tissue, which promotes unilocular lipid droplet formation by mediating lipid droplet fusion. Lipid droplet fusion promotes their enlargement, restricting lipolysis and favoring lipid storage. Localizes on the lipid droplet surface, at focal contact sites between lipid droplets, and mediates atypical lipid droplet fusion by undergoing liquid-liquid phase separation (LLPS) and promoting directional net neutral lipid transfer from the smaller to larger lipid droplets. The transfer direction may be driven by the internal pressure difference between the contacting lipid droplet pair. Its role in neutral lipid transfer and lipid droplet enlargement is activated by the interaction with PLIN1. May also act as a CEBPB coactivator in the white adipose tissue to control the expression of a subset of CEBPB downstream target genes, including SOCS1, SOCS3, TGFB1, TGFBR1, ID2 and XDH. When overexpressed in preadipocytes, induces apoptosis or increases cell susceptibility to apoptosis induced by serum deprivation or TGFB treatment. In Bos taurus (Bovine), this protein is Lipid transferase CIDEC.